Reading from the N-terminus, the 202-residue chain is Dephospho-CoA kinase (202 aa).

In terms of domain architecture, DPCK spans 4–202 (FLGLTGGIAT…EGVCHKSGMS (199 aa)). An ATP-binding site is contributed by 12 to 17 (ATGKTT).

The protein belongs to the CoaE family.

Its subcellular location is the cytoplasm. It carries out the reaction 3'-dephospho-CoA + ATP = ADP + CoA + H(+). The protein operates within cofactor biosynthesis; coenzyme A biosynthesis; CoA from (R)-pantothenate: step 5/5. Functionally, catalyzes the phosphorylation of the 3'-hydroxyl group of dephosphocoenzyme A to form coenzyme A. This Latilactobacillus sakei subsp. sakei (strain 23K) (Lactobacillus sakei subsp. sakei) protein is Dephospho-CoA kinase.